The primary structure comprises 449 residues: Glucose-6-phosphate isomerase (449 aa).

Residue Glu-291 is the Proton donor of the active site. Residues His-312 and Lys-426 contribute to the active site.

Belongs to the GPI family.

The protein localises to the cytoplasm. The enzyme catalyses alpha-D-glucose 6-phosphate = beta-D-fructose 6-phosphate. It functions in the pathway carbohydrate biosynthesis; gluconeogenesis. The protein operates within carbohydrate degradation; glycolysis; D-glyceraldehyde 3-phosphate and glycerone phosphate from D-glucose: step 2/4. Its function is as follows. Catalyzes the reversible isomerization of glucose-6-phosphate to fructose-6-phosphate. The sequence is that of Glucose-6-phosphate isomerase from Streptococcus pyogenes serotype M49 (strain NZ131).